A 204-amino-acid polypeptide reads, in one-letter code: Leucyl/phenylalanyl-tRNA--protein transferase (204 aa).

It belongs to the L/F-transferase family.

It is found in the cytoplasm. The enzyme catalyses N-terminal L-lysyl-[protein] + L-leucyl-tRNA(Leu) = N-terminal L-leucyl-L-lysyl-[protein] + tRNA(Leu) + H(+). It carries out the reaction N-terminal L-arginyl-[protein] + L-leucyl-tRNA(Leu) = N-terminal L-leucyl-L-arginyl-[protein] + tRNA(Leu) + H(+). The catalysed reaction is L-phenylalanyl-tRNA(Phe) + an N-terminal L-alpha-aminoacyl-[protein] = an N-terminal L-phenylalanyl-L-alpha-aminoacyl-[protein] + tRNA(Phe). In terms of biological role, functions in the N-end rule pathway of protein degradation where it conjugates Leu, Phe and, less efficiently, Met from aminoacyl-tRNAs to the N-termini of proteins containing an N-terminal arginine or lysine. The chain is Leucyl/phenylalanyl-tRNA--protein transferase from Rhizobium johnstonii (strain DSM 114642 / LMG 32736 / 3841) (Rhizobium leguminosarum bv. viciae).